A 514-amino-acid polypeptide reads, in one-letter code: Bifunctional purine biosynthesis protein PurH (514 aa).

The region spanning 1-145 (MIKRALISVS…KNYQDVVVIV (145 aa)) is the MGS-like domain.

The protein belongs to the PurH family.

The enzyme catalyses (6R)-10-formyltetrahydrofolate + 5-amino-1-(5-phospho-beta-D-ribosyl)imidazole-4-carboxamide = 5-formamido-1-(5-phospho-D-ribosyl)imidazole-4-carboxamide + (6S)-5,6,7,8-tetrahydrofolate. The catalysed reaction is IMP + H2O = 5-formamido-1-(5-phospho-D-ribosyl)imidazole-4-carboxamide. It participates in purine metabolism; IMP biosynthesis via de novo pathway; 5-formamido-1-(5-phospho-D-ribosyl)imidazole-4-carboxamide from 5-amino-1-(5-phospho-D-ribosyl)imidazole-4-carboxamide (10-formyl THF route): step 1/1. The protein operates within purine metabolism; IMP biosynthesis via de novo pathway; IMP from 5-formamido-1-(5-phospho-D-ribosyl)imidazole-4-carboxamide: step 1/1. The chain is Bifunctional purine biosynthesis protein PurH from Acetivibrio thermocellus (strain ATCC 27405 / DSM 1237 / JCM 9322 / NBRC 103400 / NCIMB 10682 / NRRL B-4536 / VPI 7372) (Clostridium thermocellum).